The sequence spans 158 residues: Large ribosomal subunit protein uL16 (158 aa).

Belongs to the universal ribosomal protein uL16 family. Part of the 50S ribosomal subunit.

Binds 23S rRNA and is also seen to make contacts with the A and possibly P site tRNAs. In Synechococcus sp. (strain CC9902), this protein is Large ribosomal subunit protein uL16.